Reading from the N-terminus, the 137-residue chain is Putative pre-16S rRNA nuclease (137 aa).

This sequence belongs to the YqgF nuclease family.

Its subcellular location is the cytoplasm. Could be a nuclease involved in processing of the 5'-end of pre-16S rRNA. This is Putative pre-16S rRNA nuclease from Clostridium botulinum (strain Eklund 17B / Type B).